Here is a 567-residue protein sequence, read N- to C-terminus: Zinc finger protein 143 (567 aa).

C2H2-type zinc fingers lie at residues 230 to 254 (FRCD…ERSH), 260 to 284 (YQCD…VRTH), 290 to 314 (YRCS…VRTH), 320 to 344 (FKCP…IRTH), 350 to 374 (YYCS…VRIH), 380 to 404 (YVCT…HVVH), and 410 to 433 (YNCN…RTAH). Residues 506–520 (SATESGPQHSHNLGG) show a composition bias toward polar residues. A disordered region spans residues 506–525 (SATESGPQHSHNLGGSESRP).

The protein belongs to the GLI C2H2-type zinc-finger protein family.

The protein resides in the nucleus. Functionally, transcriptional activator. Activates the gene for selenocysteine tRNA (tRNAsec). Binds to the activator element (AE) motif of the selenocysteine tRNA gene promoter. The protein is Zinc finger protein 143 (znf143) of Xenopus tropicalis (Western clawed frog).